A 269-amino-acid polypeptide reads, in one-letter code: BAG family molecular chaperone regulator 4 (269 aa).

The interval 1 to 40 (MMHNSTEESEWEVRPGGMLVQRRDDAASSDHKPLQDPDSA) is disordered. Basic and acidic residues predominate over residues 21–35 (QRRDDAASSDHKPLQ). The Ubiquitin-like domain occupies 46 to 122 (QTIRITVSHG…LVVVVEDTNK (77 aa)). A BAG domain is found at 138-219 (AIAAVNAVTG…NLQEAVDKLK (82 aa)). The tract at residues 241–269 (SFGNGVGSLNPPPPASPSANVTQDWEKFD) is disordered.

Binds to the ATPase domain of HSP70/HSC70 chaperones. Interacts with HSP70-1. As to expression, detected in stems, leaves, flowers and roots.

Its function is as follows. Co-chaperone that regulates diverse cellular pathways, such as programmed cell death and stress responses. The chain is BAG family molecular chaperone regulator 4 (BAG4) from Arabidopsis thaliana (Mouse-ear cress).